The primary structure comprises 724 residues: Coiled-coil domain-containing protein 175 (724 aa).

5 coiled-coil regions span residues 131 to 164, 203 to 256, 282 to 373, 426 to 534, and 565 to 627; these read VEMSELHTKITRINDEIEFLKKKILHLQTDNTAL, INLE…RKET, VVLS…RQYK, ELHR…ERKL, and QLQV…QLRE.

This Bos taurus (Bovine) protein is Coiled-coil domain-containing protein 175 (CCDC175).